The sequence spans 484 residues: ATP synthase subunit beta (484 aa).

Residue 169-176 participates in ATP binding; it reads GGAGVGKT.

Belongs to the ATPase alpha/beta chains family. F-type ATPases have 2 components, CF(1) - the catalytic core - and CF(0) - the membrane proton channel. CF(1) has five subunits: alpha(3), beta(3), gamma(1), delta(1), epsilon(1). CF(0) has three main subunits: a(1), b(2) and c(9-12). The alpha and beta chains form an alternating ring which encloses part of the gamma chain. CF(1) is attached to CF(0) by a central stalk formed by the gamma and epsilon chains, while a peripheral stalk is formed by the delta and b chains.

It localises to the cell membrane. It catalyses the reaction ATP + H2O + 4 H(+)(in) = ADP + phosphate + 5 H(+)(out). Functionally, produces ATP from ADP in the presence of a proton gradient across the membrane. The catalytic sites are hosted primarily by the beta subunits. The sequence is that of ATP synthase subunit beta from Nocardioides sp. (strain ATCC BAA-499 / JS614).